Consider the following 76-residue polypeptide: Esculentin-2MT1 (76 aa).

The signal sequence occupies residues 1-22 (MFTMKKPLLLLFFLGTISLSLC). Residues 23-37 (EEERNADEDDGEKEV) constitute a propeptide that is removed on maturation. A disulfide bridge connects residues Cys-70 and Cys-76.

Belongs to the frog skin active peptide (FSAP) family. Esculentin subfamily. In terms of tissue distribution, expressed by the skin glands.

The protein localises to the secreted. Its function is as follows. Antimicrobial peptide. The sequence is that of Esculentin-2MT1 from Amolops mantzorum (Sichuan torrent frog).